A 616-amino-acid polypeptide reads, in one-letter code: Dihydroxy-acid dehydratase (616 aa).

D81 contributes to the Mg(2+) binding site. C122 lines the [2Fe-2S] cluster pocket. Mg(2+) contacts are provided by D123 and K124. At K124 the chain carries N6-carboxylysine. C195 contributes to the [2Fe-2S] cluster binding site. E491 provides a ligand contact to Mg(2+). The active-site Proton acceptor is the S517.

This sequence belongs to the IlvD/Edd family. Homodimer. [2Fe-2S] cluster serves as cofactor. It depends on Mg(2+) as a cofactor.

It catalyses the reaction (2R)-2,3-dihydroxy-3-methylbutanoate = 3-methyl-2-oxobutanoate + H2O. The enzyme catalyses (2R,3R)-2,3-dihydroxy-3-methylpentanoate = (S)-3-methyl-2-oxopentanoate + H2O. It participates in amino-acid biosynthesis; L-isoleucine biosynthesis; L-isoleucine from 2-oxobutanoate: step 3/4. The protein operates within amino-acid biosynthesis; L-valine biosynthesis; L-valine from pyruvate: step 3/4. In terms of biological role, functions in the biosynthesis of branched-chain amino acids. Catalyzes the dehydration of (2R,3R)-2,3-dihydroxy-3-methylpentanoate (2,3-dihydroxy-3-methylvalerate) into 2-oxo-3-methylpentanoate (2-oxo-3-methylvalerate) and of (2R)-2,3-dihydroxy-3-methylbutanoate (2,3-dihydroxyisovalerate) into 2-oxo-3-methylbutanoate (2-oxoisovalerate), the penultimate precursor to L-isoleucine and L-valine, respectively. This Escherichia coli O157:H7 (strain EC4115 / EHEC) protein is Dihydroxy-acid dehydratase.